The sequence spans 536 residues: Phosphoenolpyruvate carboxykinase (ATP) (536 aa).

3 residues coordinate substrate: arginine 61, tyrosine 195, and lysine 201. ATP-binding positions include lysine 201, histidine 220, and 236–244 (GLSGTGKTT). Positions 201 and 220 each coordinate Mn(2+). Residue aspartate 257 participates in Mn(2+) binding. ATP-binding residues include glutamate 285, arginine 322, and threonine 447. Arginine 322 contributes to the substrate binding site.

This sequence belongs to the phosphoenolpyruvate carboxykinase (ATP) family. It depends on Mn(2+) as a cofactor.

The protein localises to the cytoplasm. The catalysed reaction is oxaloacetate + ATP = phosphoenolpyruvate + ADP + CO2. It functions in the pathway carbohydrate biosynthesis; gluconeogenesis. Its function is as follows. Involved in the gluconeogenesis. Catalyzes the conversion of oxaloacetate (OAA) to phosphoenolpyruvate (PEP) through direct phosphoryl transfer between the nucleoside triphosphate and OAA. This Rhizobium meliloti (strain 1021) (Ensifer meliloti) protein is Phosphoenolpyruvate carboxykinase (ATP).